The chain runs to 500 residues: Galactose/methyl galactoside import ATP-binding protein MglA (500 aa).

ABC transporter domains lie at 8-243 (LEME…VGRD) and 257-500 (EMIL…AKYL). An ATP-binding site is contributed by 40-47 (GENGAGKS).

Belongs to the ABC transporter superfamily. Galactose/methyl galactoside importer (TC 3.A.1.2.3) family. In terms of assembly, the complex is composed of one ATP-binding protein (MglA), two transmembrane proteins (MglC) and a solute-binding protein (MglB).

It is found in the cell inner membrane. It catalyses the reaction D-galactose(out) + ATP + H2O = D-galactose(in) + ADP + phosphate + H(+). The enzyme catalyses methyl beta-D-galactoside(out) + ATP + H2O = methyl beta-D-galactoside(in) + ADP + phosphate + H(+). Functionally, part of the ABC transporter complex MglABC involved in galactose/methyl galactoside import. Responsible for energy coupling to the transport system. The chain is Galactose/methyl galactoside import ATP-binding protein MglA from Fusobacterium nucleatum subsp. nucleatum (strain ATCC 25586 / DSM 15643 / BCRC 10681 / CIP 101130 / JCM 8532 / KCTC 2640 / LMG 13131 / VPI 4355).